We begin with the raw amino-acid sequence, 456 residues long: tRNA-2-methylthio-N(6)-dimethylallyladenosine synthase (456 aa).

Residues 6 to 125 form the MTTase N-terminal domain; it reads KRLFIKTYGC…LPELIAQAHR (120 aa). The [4Fe-4S] cluster site is built by Cys-15, Cys-51, Cys-88, Cys-163, Cys-167, and Cys-170. Residues 149-385 form the Radical SAM core domain; sequence QVEGYSAFVT…QELLSDQQAA (237 aa). In terms of domain architecture, TRAM spans 388-450; the sequence is ESMIGRTLPV…RNSLSGSLTG (63 aa).

It belongs to the methylthiotransferase family. MiaB subfamily. Monomer. The cofactor is [4Fe-4S] cluster.

It is found in the cytoplasm. The enzyme catalyses N(6)-dimethylallyladenosine(37) in tRNA + (sulfur carrier)-SH + AH2 + 2 S-adenosyl-L-methionine = 2-methylsulfanyl-N(6)-dimethylallyladenosine(37) in tRNA + (sulfur carrier)-H + 5'-deoxyadenosine + L-methionine + A + S-adenosyl-L-homocysteine + 2 H(+). Catalyzes the methylthiolation of N6-(dimethylallyl)adenosine (i(6)A), leading to the formation of 2-methylthio-N6-(dimethylallyl)adenosine (ms(2)i(6)A) at position 37 in tRNAs that read codons beginning with uridine. The polypeptide is tRNA-2-methylthio-N(6)-dimethylallyladenosine synthase (Maricaulis maris (strain MCS10) (Caulobacter maris)).